Consider the following 146-residue polypeptide: D-aminoacyl-tRNA deacylase (146 aa).

The Gly-cisPro motif, important for rejection of L-amino acids motif lies at 138–139 (GP).

This sequence belongs to the DTD family. In terms of assembly, homodimer.

It is found in the cytoplasm. The enzyme catalyses glycyl-tRNA(Ala) + H2O = tRNA(Ala) + glycine + H(+). It catalyses the reaction a D-aminoacyl-tRNA + H2O = a tRNA + a D-alpha-amino acid + H(+). Functionally, an aminoacyl-tRNA editing enzyme that deacylates mischarged D-aminoacyl-tRNAs. Also deacylates mischarged glycyl-tRNA(Ala), protecting cells against glycine mischarging by AlaRS. Acts via tRNA-based rather than protein-based catalysis; rejects L-amino acids rather than detecting D-amino acids in the active site. By recycling D-aminoacyl-tRNA to D-amino acids and free tRNA molecules, this enzyme counteracts the toxicity associated with the formation of D-aminoacyl-tRNA entities in vivo and helps enforce protein L-homochirality. The chain is D-aminoacyl-tRNA deacylase from Tolumonas auensis (strain DSM 9187 / NBRC 110442 / TA 4).